The following is a 358-amino-acid chain: Glutamate--cysteine ligase (358 aa).

Belongs to the glutamate--cysteine ligase type 2 family. YbdK subfamily.

The enzyme catalyses L-cysteine + L-glutamate + ATP = gamma-L-glutamyl-L-cysteine + ADP + phosphate + H(+). Functionally, catalyzes the synthesis of gamma-glutamylcysteine (gamma-GC), the main low-molecular-weight thiol compound instead of glutathione in halophilic archaea. This is Glutamate--cysteine ligase from Haloferax volcanii (strain ATCC 29605 / DSM 3757 / JCM 8879 / NBRC 14742 / NCIMB 2012 / VKM B-1768 / DS2) (Halobacterium volcanii).